The chain runs to 307 residues: tRNA pseudouridine synthase B (307 aa).

Asp-38 serves as the catalytic Nucleophile.

This sequence belongs to the pseudouridine synthase TruB family. Type 1 subfamily.

The catalysed reaction is uridine(55) in tRNA = pseudouridine(55) in tRNA. Functionally, responsible for synthesis of pseudouridine from uracil-55 in the psi GC loop of transfer RNAs. This chain is tRNA pseudouridine synthase B, found in Bacillus anthracis.